The following is a 293-amino-acid chain: tRNA pseudouridine synthase A (293 aa).

Residue Asp-60 is the Nucleophile of the active site. Residue Tyr-118 coordinates substrate.

It belongs to the tRNA pseudouridine synthase TruA family. In terms of assembly, homodimer.

The catalysed reaction is uridine(38/39/40) in tRNA = pseudouridine(38/39/40) in tRNA. Formation of pseudouridine at positions 38, 39 and 40 in the anticodon stem and loop of transfer RNAs. This chain is tRNA pseudouridine synthase A, found in Rippkaea orientalis (strain PCC 8801 / RF-1) (Cyanothece sp. (strain PCC 8801)).